The primary structure comprises 192 residues: Imidazoleglycerol-phosphate dehydratase (192 aa).

The protein belongs to the imidazoleglycerol-phosphate dehydratase family.

It is found in the cytoplasm. It carries out the reaction D-erythro-1-(imidazol-4-yl)glycerol 3-phosphate = 3-(imidazol-4-yl)-2-oxopropyl phosphate + H2O. Its pathway is amino-acid biosynthesis; L-histidine biosynthesis; L-histidine from 5-phospho-alpha-D-ribose 1-diphosphate: step 6/9. The polypeptide is Imidazoleglycerol-phosphate dehydratase (Caldivirga maquilingensis (strain ATCC 700844 / DSM 13496 / JCM 10307 / IC-167)).